The sequence spans 240 residues: Endo-chitosanase B (240 aa).

The N-terminal stretch at 1-17 is a signal peptide; sequence MRLSEILAVALVTGATA. An N-linked (GlcNAc...) asparagine glycan is attached at Asn-86.

It belongs to the glycosyl hydrolase 75 family.

The protein resides in the secreted. It catalyses the reaction Endohydrolysis of beta-(1-&gt;4)-linkages between D-glucosamine residues in a partly acetylated chitosan.. Functionally, chitosanase catalyzing the endo-type cleavage of chitosan, the deacylated form of chitin. Chitosanase may be crucial in the degradation of the deacetylated portion of chitin in the fungal cell wall. Chitoolisaccharides produced by the hydrolysis of partially N-acetylated chitosan are known to have many biological activities, including antibacterial activity, immune-enhancing effects, and elicitor activity. The protein is Endo-chitosanase B (csnB) of Aspergillus oryzae (Yellow koji mold).